Consider the following 223-residue polypeptide: Riboflavin kinase (223 aa).

The tract at residues 1–89 (MHRINALKHL…KHIFCGDEDK (89 aa)) is unknown. The segment at 90 to 223 (VELYGNVITG…IMIEDRSACE (134 aa)) is riboflavin kinase. 99–104 (GLGEGQ) is a binding site for CDP. 2 residues coordinate Mg(2+): threonine 128 and asparagine 130. FMN contacts are provided by serine 185 and glutamate 193. 198–201 (VHLR) lines the CDP pocket.

The protein belongs to the archaeal riboflavin kinase family. Requires Mg(2+) as cofactor.

It carries out the reaction riboflavin + CTP = CDP + FMN + H(+). Its pathway is cofactor biosynthesis; FMN biosynthesis; FMN from riboflavin (CTP route): step 1/1. In terms of biological role, catalyzes the CTP-dependent phosphorylation of riboflavin (vitamin B2) to form flavin mononucleotide (FMN). The polypeptide is Riboflavin kinase (ribK) (Methanococcoides burtonii (strain DSM 6242 / NBRC 107633 / OCM 468 / ACE-M)).